Here is a 193-residue protein sequence, read N- to C-terminus: Proton-translocating ferredoxin:NAD(+) oxidoreductase complex subunit A (193 aa).

6 helical membrane passes run 11–31 (AVVV…FFGV), 39–59 (VGMG…AWVV), 62–82 (FVLI…LLIA), 102–122 (MWGI…VPIL), 134–154 (VVNA…MASL), and 171–191 (GVAF…SGMI).

This sequence belongs to the NqrDE/RnfAE family. As to quaternary structure, the complex is composed of six subunits: RnfA, RnfB, RnfC, RnfD, RnfE and RnfG.

Its subcellular location is the cell membrane. In terms of biological role, part of a membrane-bound complex that couples electron transfer with translocation of ions across the membrane. Couples electron transfer from reduced ferredoxin to NAD(+) with translocation of H(+) out of the cell. Essential for energy conservation during autotrophic growth. Contributes to ATP synthesis during heterotrophic growth. The sequence is that of Proton-translocating ferredoxin:NAD(+) oxidoreductase complex subunit A from Clostridium ljungdahlii (strain ATCC 55383 / DSM 13528 / PETC).